We begin with the raw amino-acid sequence, 49 residues long: Osteocalcin (49 aa).

The 47-residue stretch at Tyr-1–Gly-47 folds into the Gla domain. Positions 17, 21, 24, and 30 each coordinate Ca(2+). Glu-17, Glu-21, and Glu-24 each carry 4-carboxyglutamate. A disulfide bridge connects residues Cys-23 and Cys-29.

The protein belongs to the osteocalcin/matrix Gla protein family. Gamma-carboxyglutamate residues are formed by vitamin K dependent carboxylation by GGCX. These residues are essential for the binding of calcium. Decarboxylation promotes the hormone activity.

The protein resides in the secreted. Functionally, the carboxylated form is one of the main organic components of the bone matrix, which constitutes 1-2% of the total bone protein. It acts as a negative regulator of bone formation and is required to limit bone formation without impairing bone resorption or mineralization. The carboxylated form binds strongly to apatite and calcium. The uncarboxylated form acts as a hormone secreted by osteoblasts, which regulates different cellular processes, such as energy metabolism, male fertility and brain development. Regulates of energy metabolism by acting as a hormone favoring pancreatic beta-cell proliferation, insulin secretion and sensitivity and energy expenditure. Uncarboxylated osteocalcin hormone also promotes testosterone production in the testes: acts as a ligand for G protein-coupled receptor GPRC6A at the surface of Leydig cells, initiating a signaling response that promotes the expression of enzymes required for testosterone synthesis in a CREB-dependent manner. Also acts as a regulator of brain development: osteocalcin hormone crosses the blood-brain barrier and acts as a ligand for GPR158 on neurons, initiating a signaling response that prevents neuronal apoptosis in the hippocampus, favors the synthesis of all monoamine neurotransmitters and inhibits that of gamma-aminobutyric acid (GABA). Osteocalcin also crosses the placenta during pregnancy and maternal osteocalcin is required for fetal brain development. The sequence is that of Osteocalcin (BGLAP) from Canis lupus familiaris (Dog).